We begin with the raw amino-acid sequence, 304 residues long: Protease HtpX homolog (304 aa).

A run of 2 helical transmembrane segments spans residues 14–34 (VFIILGFFIFVLMVGAAIGII) and 39–59 (YLNGLILAAAIGAVYILIMVM). His-144 provides a ligand contact to Zn(2+). Residue Glu-145 is part of the active site. His-148 is a binding site for Zn(2+). The next 2 membrane-spanning stretches (helical) occupy residues 159 to 179 (IAIALVAVIAILSDLAMRLIF) and 202 to 222 (IIIYVVALIFVILAPIIATAI). Position 231 (Glu-231) interacts with Zn(2+). Positions 275 to 304 (SSPLKSKKDKPGLFDSHPPISSRIERLENM) are disordered.

It belongs to the peptidase M48B family. Requires Zn(2+) as cofactor.

It is found in the cell membrane. The polypeptide is Protease HtpX homolog (Listeria innocua serovar 6a (strain ATCC BAA-680 / CLIP 11262)).